The sequence spans 112 residues: Large ribosomal subunit protein bL21 (112 aa).

It belongs to the bacterial ribosomal protein bL21 family. Part of the 50S ribosomal subunit. Contacts protein L20.

This protein binds to 23S rRNA in the presence of protein L20. The polypeptide is Large ribosomal subunit protein bL21 (Buchnera aphidicola subsp. Baizongia pistaciae (strain Bp)).